Consider the following 206-residue polypeptide: MEFNVKTLEGKDAGKVSLSDAIFGLEPREDILARVIRWQLAKKQQGTHKAKGRAEVSRTGAKMYKQKGTGRARHHSARAPQFRGGGKAHGPVVRSHEHDLPKKVRALGLRHALSAKIKADDVIVIDNLVAAEAKTKSLASVFETLGLTNALFIGGAELDGNFKLAAQNIPNIDVLPIQGINVYDIVRRGKLVLSKAAVEALEERFK.

Residues 63-97 are disordered; the sequence is MYKQKGTGRARHHSARAPQFRGGGKAHGPVVRSHE. Over residues 64-77 the composition is skewed to basic residues; sequence YKQKGTGRARHHSA.

This sequence belongs to the universal ribosomal protein uL4 family. In terms of assembly, part of the 50S ribosomal subunit.

Functionally, one of the primary rRNA binding proteins, this protein initially binds near the 5'-end of the 23S rRNA. It is important during the early stages of 50S assembly. It makes multiple contacts with different domains of the 23S rRNA in the assembled 50S subunit and ribosome. Forms part of the polypeptide exit tunnel. The chain is Large ribosomal subunit protein uL4 from Rhizobium johnstonii (strain DSM 114642 / LMG 32736 / 3841) (Rhizobium leguminosarum bv. viciae).